The chain runs to 340 residues: MTKITVVGAGSWGTALAMVLADNGHDVRIWGNRPELMDEINTKHENSRYLPGITLPSTIVAYSSLEEALVDVNTVLLVVPTKAYRDVLQEMKEIVTEPITWIHASKGIEPGTSKRISEVIEEEIPEHLIKDVVVLSGPSHAEEVGLRQATTVTSAAKRMEAAEEVQDLFMNSYFRVYTNPDIVGVELGGALKNIIALAAGITDGLGLGDNAKAALMTRGLTEIARLGRKMGGNPLTFAGLTGMGDLIVTCTSVHSRNWRAGNMLGKGHSLEEVLESMGMVVEGVRTTKAAHELAEKMEVEMPITAALYDVLFNGNNVKDAVGSLMGRVRKHEVEAIPDLL.

NADPH contacts are provided by Ser11, Trp12, Arg33, and Lys106. Lys106, Gly137, and Ser139 together coordinate sn-glycerol 3-phosphate. Ala141 is a binding site for NADPH. Residues Lys192, Asp245, Ser255, Arg256, and Asn257 each coordinate sn-glycerol 3-phosphate. Lys192 acts as the Proton acceptor in catalysis. Arg256 lines the NADPH pocket. NADPH is bound by residues Val280 and Glu282.

It belongs to the NAD-dependent glycerol-3-phosphate dehydrogenase family.

The protein resides in the cytoplasm. The catalysed reaction is sn-glycerol 3-phosphate + NAD(+) = dihydroxyacetone phosphate + NADH + H(+). The enzyme catalyses sn-glycerol 3-phosphate + NADP(+) = dihydroxyacetone phosphate + NADPH + H(+). Its pathway is membrane lipid metabolism; glycerophospholipid metabolism. Functionally, catalyzes the reduction of the glycolytic intermediate dihydroxyacetone phosphate (DHAP) to sn-glycerol 3-phosphate (G3P), the key precursor for phospholipid synthesis. In Bacillus cereus (strain B4264), this protein is Glycerol-3-phosphate dehydrogenase [NAD(P)+].